The primary structure comprises 350 residues: Opsin, longwave 563 nm (350 aa).

The Extracellular segment spans residues H1–V45. Residue N27 is glycosylated (N-linked (GlcNAc...) asparagine). A helical transmembrane segment spans residues Y46–A70. Over T71–N82 the chain is Cytoplasmic. Residues W83–V108 form a helical membrane-spanning segment. At H109 to E122 the chain is on the extracellular side. Cysteines 119 and 196 form a disulfide. Residues G123–W142 traverse the membrane as a helical segment. At E143–L161 the chain is on the cytoplasmic side. A helical membrane pass occupies residues A162 to S185. Residues R186 to S211 lie on the Extracellular side of the membrane. Residues Y212 to I239 form a helical membrane-spanning segment. The Cytoplasmic portion of the chain corresponds to R240–R261. A helical membrane pass occupies residues M262–A285. At A286 to H293 the chain is on the extracellular side. A helical membrane pass occupies residues P294–M318. K305 carries the post-translational modification N6-(retinylidene)lysine. The Cytoplasmic segment spans residues N319–S350.

It belongs to the G-protein coupled receptor 1 family. Opsin subfamily. Phosphorylated on some or all of the serine and threonine residues present in the C-terminal region. In terms of tissue distribution, the color pigments are found in the cone photoreceptor cells.

It localises to the membrane. Its function is as follows. Visual pigments are the light-absorbing molecules that mediate vision. They consist of an apoprotein, opsin, covalently linked to cis-retinal. This chain is Opsin, longwave 563 nm, found in Callithrix jacchus (White-tufted-ear marmoset).